A 642-amino-acid chain; its full sequence is Triacylglycerol lipase 3 (642 aa).

The 189-residue stretch at Leu204 to Asn392 folds into the PNPLA domain. A GXSXG motif is present at residues Gly235–Gly239. Ser237 acts as the Nucleophile in catalysis. Positions His298–Asp303 match the HXXXXD acyltransferase motif motif. Residue Glu403 is the Proton acceptor of the active site. A compositionally biased stretch (polar residues) spans Arg471–Pro481. The interval Arg471–Ser502 is disordered.

It localises to the lipid droplet. It carries out the reaction a triacylglycerol + H2O = a diacylglycerol + a fatty acid + H(+). The enzyme catalyses 1,2,3-tri-(9Z-octadecenoyl)-glycerol + H2O = di-(9Z)-octadecenoylglycerol + (9Z)-octadecenoate + H(+). It catalyses the reaction di-(9Z)-octadecenoylglycerol + H2O = (9Z-octadecenoyl)-glycerol + (9Z)-octadecenoate + H(+). The catalysed reaction is a 1-acyl-sn-glycero-3-phosphoethanolamine + (9Z)-octadecenoyl-CoA = 1-acyl-2-(9Z)-octadecenoyl-sn-glycero-3-phosphoethanolamine + CoA. It carries out the reaction a 1-acyl-sn-glycero-3-phosphoethanolamine + hexadecanoyl-CoA = 1-acyl-2-hexadecanoyl-sn-glycero-3-phosphoethanolamine + CoA. Loses its lipolytic activity in cells lacking nonpolar lipids. In terms of biological role, lipid particle-localized triacylglycerol (TAG) lipase. The lipid droplet/particle is a lipid storage compartment which serves as a depot of energy and building blocks for membrane lipid biosynthesis. Involved in the mobilization of the non-polar storage lipids triacylglycerols (TAGs) from lipid particles by hydrolysis of TAGs, releasing and supplying specific fatty acids to the appropriate metabolic pathways. Also catalyzes the acylation of lysophosphatidic acid (LPA). Important for efficient sporulation, but rather through its acyltransferase than lipase activity. The polypeptide is Triacylglycerol lipase 3 (TGL3) (Saccharomyces cerevisiae (strain ATCC 204508 / S288c) (Baker's yeast)).